A 273-amino-acid chain; its full sequence is Putative pyruvate, phosphate dikinase regulatory protein (273 aa).

Glycine 153–threonine 160 contributes to the ADP binding site.

Belongs to the pyruvate, phosphate/water dikinase regulatory protein family. PDRP subfamily.

It carries out the reaction N(tele)-phospho-L-histidyl/L-threonyl-[pyruvate, phosphate dikinase] + ADP = N(tele)-phospho-L-histidyl/O-phospho-L-threonyl-[pyruvate, phosphate dikinase] + AMP + H(+). The enzyme catalyses N(tele)-phospho-L-histidyl/O-phospho-L-threonyl-[pyruvate, phosphate dikinase] + phosphate + H(+) = N(tele)-phospho-L-histidyl/L-threonyl-[pyruvate, phosphate dikinase] + diphosphate. Its function is as follows. Bifunctional serine/threonine kinase and phosphorylase involved in the regulation of the pyruvate, phosphate dikinase (PPDK) by catalyzing its phosphorylation/dephosphorylation. The polypeptide is Putative pyruvate, phosphate dikinase regulatory protein (Rhizobium etli (strain ATCC 51251 / DSM 11541 / JCM 21823 / NBRC 15573 / CFN 42)).